A 429-amino-acid chain; its full sequence is Phosphomethylpyrimidine synthase (429 aa).

Residues Asn66, Met95, Tyr124, His163, 185 to 187, 226 to 229, and Glu265 contribute to the substrate site; these read SRG and DGLR. His269 lines the Zn(2+) pocket. Residue Tyr292 coordinates substrate. Residue His333 participates in Zn(2+) binding. Cys409, Cys412, and Cys416 together coordinate [4Fe-4S] cluster.

This sequence belongs to the ThiC family. It depends on [4Fe-4S] cluster as a cofactor.

The catalysed reaction is 5-amino-1-(5-phospho-beta-D-ribosyl)imidazole + S-adenosyl-L-methionine = 4-amino-2-methyl-5-(phosphooxymethyl)pyrimidine + CO + 5'-deoxyadenosine + formate + L-methionine + 3 H(+). Its pathway is cofactor biosynthesis; thiamine diphosphate biosynthesis. In terms of biological role, catalyzes the synthesis of the hydroxymethylpyrimidine phosphate (HMP-P) moiety of thiamine from aminoimidazole ribotide (AIR) in a radical S-adenosyl-L-methionine (SAM)-dependent reaction. The sequence is that of Phosphomethylpyrimidine synthase from Carboxydothermus hydrogenoformans (strain ATCC BAA-161 / DSM 6008 / Z-2901).